The following is a 160-amino-acid chain: SsrA-binding protein (160 aa).

Belongs to the SmpB family.

It is found in the cytoplasm. Functionally, required for rescue of stalled ribosomes mediated by trans-translation. Binds to transfer-messenger RNA (tmRNA), required for stable association of tmRNA with ribosomes. tmRNA and SmpB together mimic tRNA shape, replacing the anticodon stem-loop with SmpB. tmRNA is encoded by the ssrA gene; the 2 termini fold to resemble tRNA(Ala) and it encodes a 'tag peptide', a short internal open reading frame. During trans-translation Ala-aminoacylated tmRNA acts like a tRNA, entering the A-site of stalled ribosomes, displacing the stalled mRNA. The ribosome then switches to translate the ORF on the tmRNA; the nascent peptide is terminated with the 'tag peptide' encoded by the tmRNA and targeted for degradation. The ribosome is freed to recommence translation, which seems to be the essential function of trans-translation. This is SsrA-binding protein from Zymomonas mobilis subsp. mobilis (strain ATCC 31821 / ZM4 / CP4).